We begin with the raw amino-acid sequence, 31 residues long: Protamine CIII (31 aa).

The tract at residues 1-31 is disordered; it reads MPRRRRASRPVRRRRRPRVSRRRRRGGRRRR.

As to expression, testis.

It localises to the nucleus. It is found in the chromosome. Functionally, protamines substitute for histones in the chromatin of sperm during the haploid phase of spermatogenesis. They compact sperm DNA into a highly condensed, stable and inactive complex. The polypeptide is Protamine CIII (Oncorhynchus mykiss (Rainbow trout)).